Consider the following 714-residue polypeptide: ATP-dependent DNA helicase DinG (714 aa).

Positions 17-294 (ALQDQIPDFI…TCMEQFRPKT (278 aa)) constitute a Helicase ATP-binding domain. 54–61 (APTGVGKT) serves as a coordination point for ATP. Residues Cys-120, Cys-194, Cys-199, and Cys-205 each coordinate [4Fe-4S] cluster. A DEAH box motif is present at residues 248-251 (DEGH). In terms of domain architecture, Helicase C-terminal spans 517–698 (HIAEMAAYFR…VFPIEQPAVP (182 aa)).

It belongs to the helicase family. DinG subfamily. Type 1 sub-subfamily. It depends on [4Fe-4S] cluster as a cofactor.

It catalyses the reaction Couples ATP hydrolysis with the unwinding of duplex DNA at the replication fork by translocating in the 5'-3' direction. This creates two antiparallel DNA single strands (ssDNA). The leading ssDNA polymer is the template for DNA polymerase III holoenzyme which synthesizes a continuous strand.. The enzyme catalyses ATP + H2O = ADP + phosphate + H(+). DNA-dependent ATPase and 5'-3' DNA helicase. Unwinds D-loops, R-loops, forked DNA and G-quadruplex DNA. The chain is ATP-dependent DNA helicase DinG from Salmonella paratyphi A (strain ATCC 9150 / SARB42).